We begin with the raw amino-acid sequence, 468 residues long: V-type proton ATPase subunit H (468 aa).

Belongs to the V-ATPase H subunit family. As to quaternary structure, V-ATPase is a heteromultimeric enzyme made up of two complexes: the ATP-hydrolytic V1 complex and the proton translocation V0 complex. The V1 complex consists of three catalytic AB heterodimers that form a heterohexamer, three peripheral stalks each consisting of EG heterodimers, one central rotor including subunits D and F, and the regulatory subunits C and H. The proton translocation complex V0 consists of the proton transport subunit a, a ring of proteolipid subunits c9c'', rotary subunit d, subunits e and f, and the accessory subunits VhaAC45 and ATP6AP2.

Functionally, subunit of the V1 complex of vacuolar(H+)-ATPase (V-ATPase), a multisubunit enzyme composed of a peripheral complex (V1) that hydrolyzes ATP and a membrane integral complex (V0) that translocates protons. V-ATPase is responsible for acidifying and maintaining the pH of intracellular compartments and in some cell types, is targeted to the plasma membrane, where it is responsible for acidifying the extracellular environment. Subunit H is essential for V-ATPase activity, but not for the assembly of the complex. The protein is V-type proton ATPase subunit H (VhaSFD) of Drosophila melanogaster (Fruit fly).